Consider the following 125-residue polypeptide: Large ribosomal subunit protein eL8 (125 aa).

It belongs to the eukaryotic ribosomal protein eL8 family. As to quaternary structure, part of the 50S ribosomal subunit. Probably part of the RNase P complex.

Its subcellular location is the cytoplasm. In terms of biological role, multifunctional RNA-binding protein that recognizes the K-turn motif in ribosomal RNA, the RNA component of RNase P, box H/ACA, box C/D and box C'/D' sRNAs. In Metallosphaera sedula (strain ATCC 51363 / DSM 5348 / JCM 9185 / NBRC 15509 / TH2), this protein is Large ribosomal subunit protein eL8.